Reading from the N-terminus, the 106-residue chain is MSKLGPLARSVKWTLSVGVIGSVFYLYRYSNNGYFYDHDATWLKQDHQVQDLVDRKEVVPGETRNRKLVVTDDGTAWSRTMGESIKDIWNEQIRNSVDWIYSWGKN.

Residues 11 to 27 (VKWTLSVGVIGSVFYLY) traverse the membrane as a helical segment.

Belongs to the MICOS complex subunit Mic12 family. In terms of assembly, component of the mitochondrial contact site and cristae organizing system (MICOS) complex.

The protein localises to the mitochondrion inner membrane. Its function is as follows. Component of the MICOS complex, a large protein complex of the mitochondrial inner membrane that plays crucial roles in the maintenance of crista junctions, inner membrane architecture, and formation of contact sites to the outer membrane. In Saccharomyces cerevisiae (strain RM11-1a) (Baker's yeast), this protein is MICOS complex subunit MIC12 (AIM5).